The sequence spans 169 residues: Ureidoglycolate lyase (169 aa).

This sequence belongs to the ureidoglycolate lyase family. In terms of assembly, homodimer. It depends on Ni(2+) as a cofactor.

The catalysed reaction is (S)-ureidoglycolate = urea + glyoxylate. It participates in nitrogen metabolism; (S)-allantoin degradation. Its function is as follows. Catalyzes the catabolism of the allantoin degradation intermediate (S)-ureidoglycolate, generating urea and glyoxylate. Involved in the utilization of allantoin as nitrogen source. The polypeptide is Ureidoglycolate lyase (Brucella ovis (strain ATCC 25840 / 63/290 / NCTC 10512)).